The sequence spans 384 residues: Bifunctional enzyme IspD/IspF (384 aa).

2-C-methyl-D-erythritol 4-phosphate cytidylyltransferase stretches follow at residues 1–227 (MAKV…EGEQ) and 1–228 (MAKV…GEQR). The interval 228–384 (RIGSGFDVHR…QATALITLPF (157 aa)) is 2-C-methyl-D-erythritol 2,4-cyclodiphosphate synthase. The a divalent metal cation site is built by Asp-234 and His-236. Residues 234 to 236 (DVH) and 260 to 261 (HS) contribute to the 4-CDP-2-C-methyl-D-erythritol 2-phosphate site. His-268 contributes to the a divalent metal cation binding site. 4-CDP-2-C-methyl-D-erythritol 2-phosphate is bound by residues 282–284 (DIG), 358–361 (TTTE), Phe-365, and Arg-368.

The protein in the N-terminal section; belongs to the IspD/TarI cytidylyltransferase family. IspD subfamily. This sequence in the C-terminal section; belongs to the IspF family. A divalent metal cation serves as cofactor.

It catalyses the reaction 2-C-methyl-D-erythritol 4-phosphate + CTP + H(+) = 4-CDP-2-C-methyl-D-erythritol + diphosphate. The catalysed reaction is 4-CDP-2-C-methyl-D-erythritol 2-phosphate = 2-C-methyl-D-erythritol 2,4-cyclic diphosphate + CMP. Its pathway is isoprenoid biosynthesis; isopentenyl diphosphate biosynthesis via DXP pathway; isopentenyl diphosphate from 1-deoxy-D-xylulose 5-phosphate: step 2/6. It functions in the pathway isoprenoid biosynthesis; isopentenyl diphosphate biosynthesis via DXP pathway; isopentenyl diphosphate from 1-deoxy-D-xylulose 5-phosphate: step 4/6. Bifunctional enzyme that catalyzes the formation of 4-diphosphocytidyl-2-C-methyl-D-erythritol from CTP and 2-C-methyl-D-erythritol 4-phosphate (MEP) (IspD), and catalyzes the conversion of 4-diphosphocytidyl-2-C-methyl-D-erythritol 2-phosphate (CDP-ME2P) to 2-C-methyl-D-erythritol 2,4-cyclodiphosphate (ME-CPP) with a corresponding release of cytidine 5-monophosphate (CMP) (IspF). In Rhodospirillum rubrum (strain ATCC 11170 / ATH 1.1.1 / DSM 467 / LMG 4362 / NCIMB 8255 / S1), this protein is Bifunctional enzyme IspD/IspF.